The sequence spans 43 residues: Protein PsbN (43 aa).

The helical transmembrane segment at 7-27 (LIIFIASLLLGLTGYSIYTAF) threads the bilayer.

The protein belongs to the PsbN family.

It is found in the plastid. It localises to the chloroplast thylakoid membrane. Functionally, may play a role in photosystem I and II biogenesis. In Guillardia theta (Cryptophyte), this protein is Protein PsbN.